The following is a 616-amino-acid chain: Heme A synthase-mitochondrial ferredoxin fusion protein (616 aa).

The transit peptide at 1–45 (MNISRSSGLMRQFLLQPLRKGCDISCLGRSSWRMSRSFSGSSVLN) directs the protein to the mitochondrion. Residues 45–465 (NEINLSRTKN…AALSLAQRLH (421 aa)) are heme a synthase cox15-like. Over 46 to 97 (EINLSRTKNLFLNDCKFNKNSFEKFFARRLSNSVAPTPGGILQETEKIPSKK) the chain is Mitochondrial matrix. Residues 98–118 (VAFWLLGSSALVLAIVVVGGI) traverse the membrane as a helical segment. The Mitochondrial intermembrane portion of the chain corresponds to 119-182 (TRLTESGLSI…NIFFWEWFHR (64 aa)). Residue His-181 participates in heme o binding. Residues 183 to 203 (VLGRGIGLTILLPSIYMIVTK) form a helical membrane-spanning segment. The Mitochondrial matrix portion of the chain corresponds to 204-212 (RASPWLSKR). A helical transmembrane segment spans residues 213 to 233 (LIGLTGLVGLQGVIGWWMVKS). The Mitochondrial intermembrane segment spans residues 234-254 (GLSEELFSDGSHPRVSHYRLA). The chain crosses the membrane as a helical span at residues 255 to 275 (THLAAAVALYIGLVWTGHGIL). Position 256 (His-256) interacts with heme o. The Mitochondrial matrix portion of the chain corresponds to 276-311 (QRHAFLKSMKSGSTSQLTSMVSSVQKMKGFRTSVNS). A helical membrane pass occupies residues 312 to 332 (FVGLVLITLLSGAFVAGLDAG). Residues 333-380 (MIYCTFPEMGEGRLAPSKSELFDQRFCRKDDKSDLIWRNMIDNPSLVQ) are Mitochondrial intermembrane-facing. A helical membrane pass occupies residues 381–401 (LEHRILAITTFVAACGLFIFS). Heme b is bound at residue His-383. Topologically, residues 402-417 (RAKRNILPKKIKTSIN) are mitochondrial matrix. The chain crosses the membrane as a helical span at residues 418 to 438 (VVTGVVTAQATLGIMTLIYVV). Pro-439 is a topological domain (mitochondrial intermembrane). A helical membrane pass occupies residues 440–460 (VPLAALHQAGSLVTLTAALSL). His-446 contributes to the heme b binding site. The Mitochondrial matrix portion of the chain corresponds to 461–616 (AQRLHPEYAL…RNIRLERPKA (156 aa)). In terms of domain architecture, 2Fe-2S ferredoxin-type spans 502–606 (FRPSFHSEIK…GIRVRIPAQT (105 aa)). The segment at 516-616 (GTGIKVFFVT…RNIRLERPKA (101 aa)) is mitochondrial ferredoxin yah1-like. [2Fe-2S] cluster is bound by residues Cys-541, Cys-547, Cys-550, and Cys-587.

The protein in the N-terminal section; belongs to the COX15/CtaA family. Type 2 subfamily. It in the C-terminal section; belongs to the adrenodoxin/putidaredoxin family. As to quaternary structure, homodimer. It depends on heme b as a cofactor. [2Fe-2S] cluster serves as cofactor. The etp1 preprotein is cleaved into 2 chains after imort into mitochondria. The N-terminal chain containing a heme A synthase cox15-like domain etp1(cd) is a subunit of the membrane-embedded cytochrome c oxidase complex and functions in the respiratory chain. The C-terminal chain containing a ferredoxin yah1-like domain etp1(fd) is released and serves in the matrix as electron transfer protein.

It is found in the mitochondrion inner membrane. The protein resides in the mitochondrion matrix. It carries out the reaction Fe(II)-heme o + 2 A + H2O = Fe(II)-heme a + 2 AH2. The protein operates within porphyrin-containing compound metabolism; heme A biosynthesis; heme A from heme O: step 1/1. Functionally, catalyzes the second reaction in the biosynthesis of heme A, a prosthetic group of mitochondrial cytochrome c oxidase (CcO). Heme A is synthesized from heme B by two sequential enzymatic reactions catalyzed by heme O synthase (HOS) and heme A synthase (HAS). HAS catalyzes the conversion of heme O to heme A by two successive hydroxylations of the methyl group at C8, in a reaction that involves matrix ferredoxin and ferredoxin reductase. The first hydroxylation forms heme I, the second hydroxylation results in an unstable dihydroxymethyl group, which spontaneously dehydrates, resulting in the formyl group of heme A. In terms of biological role, iron-sulfur protein that transfers electrons in a wide variety of metabolic reactions. Involved in heme A biosynthesis and in iron-sulfur cluster assembly. Transfers electrons from adrenodoxin reductase arh1 to heme A synthase etp1(cd), a heme protein that catalyzes the conversion of heme O to heme A. Required for the de novo synthesis of Fe-S clusters on iron sulfur cluster assembly protein isu1. Interact in its reduced state with isu1 to productively deliver electrons for Fe-S cluster synthesis. Essential for coenzyme Q biosynthesis. May transfer the electrons required for the hydroxylation reaction performed by coq6. In Schizosaccharomyces pombe (strain 972 / ATCC 24843) (Fission yeast), this protein is Heme A synthase-mitochondrial ferredoxin fusion protein.